The following is a 132-amino-acid chain: Antileukoproteinase (132 aa).

The signal sequence occupies residues 1–25 (MKSSGLFPFLVLLALGTLAPWAVEG). 2 WAP domains span residues 28 to 76 (KSFK…LDPV) and 82 to 130 (TRRK…VSPV). 8 cysteine pairs are disulfide-bonded: Cys-35–Cys-64, Cys-43–Cys-68, Cys-51–Cys-63, Cys-57–Cys-72, Cys-89–Cys-118, Cys-96–Cys-122, Cys-105–Cys-117, and Cys-111–Cys-126. An elastase inhibitory domain region spans residues 84-132 (RKPGKCPVTYGQCLMLNPPNFCEMDGQCKRDLKCCMGMCGKSCVSPVKA).

In terms of assembly, interacts with GRN; interaction protects progranulin from proteolysis. As to expression, detected in blood plasma. Detected in bone marrow myeloid cells. Detected in airway sputum. Detected in parotid gland secretions. Detected in seminal plasma (at protein level). Detected in uterus cervix.

The protein resides in the secreted. Acid-stable proteinase inhibitor with strong affinities for trypsin, chymotrypsin, elastase, and cathepsin G. Modulates the inflammatory and immune responses after bacterial infection, and after infection by the intracellular parasite L.major. Down-regulates responses to bacterial lipopolysaccharide (LPS). Plays a role in regulating the activation of NF-kappa-B and inflammatory responses. Has antimicrobial activity against mycobacteria, but not against salmonella. Contributes to normal resistance against infection by M.tuberculosis. Required for normal resistance to infection by L.major. Required for normal wound healing, probably by preventing tissue damage by limiting protease activity. Together with ELANE, required for normal differentiation and proliferation of bone marrow myeloid cells. This is Antileukoproteinase (SLPI) from Homo sapiens (Human).